Here is a 262-residue protein sequence, read N- to C-terminus: 3-methyl-2-oxobutanoate hydroxymethyltransferase (262 aa).

Asp-44 and Asp-83 together coordinate Mg(2+). Residues 44–45 (DS), Asp-83, and Lys-111 each bind 3-methyl-2-oxobutanoate. Glu-113 provides a ligand contact to Mg(2+). Glu-180 serves as the catalytic Proton acceptor.

Belongs to the PanB family. Homodecamer; pentamer of dimers. It depends on Mg(2+) as a cofactor.

Its subcellular location is the cytoplasm. The enzyme catalyses 3-methyl-2-oxobutanoate + (6R)-5,10-methylene-5,6,7,8-tetrahydrofolate + H2O = 2-dehydropantoate + (6S)-5,6,7,8-tetrahydrofolate. The protein operates within cofactor biosynthesis; (R)-pantothenate biosynthesis; (R)-pantoate from 3-methyl-2-oxobutanoate: step 1/2. In terms of biological role, catalyzes the reversible reaction in which hydroxymethyl group from 5,10-methylenetetrahydrofolate is transferred onto alpha-ketoisovalerate to form ketopantoate. The polypeptide is 3-methyl-2-oxobutanoate hydroxymethyltransferase (Alcanivorax borkumensis (strain ATCC 700651 / DSM 11573 / NCIMB 13689 / SK2)).